Reading from the N-terminus, the 896-residue chain is Translation initiation factor IF-2 (896 aa).

Positions 49 to 310 (LKKEHGDTSG…MQQGFDKSAT (262 aa)) are disordered. Residues 57–66 (SGETEPTRLT) are compositionally biased toward polar residues. Composition is skewed to basic and acidic residues over residues 101 to 174 (STIE…KDMN), 184 to 240 (AKKE…KSAD), and 250 to 263 (REAE…DEKA). The span at 284–295 (RNQRGRGGKGKL) shows a compositional bias: basic residues. One can recognise a tr-type G domain in the interval 395-564 (GRAPVVTIMG…LLQSEVLELT (170 aa)). The G1 stretch occupies residues 404–411 (GHVDHGKT). Residue 404–411 (GHVDHGKT) participates in GTP binding. The tract at residues 429–433 (GITQH) is G2. The segment at 450 to 453 (DTPG) is G3. GTP-binding positions include 450 to 454 (DTPGH) and 504 to 507 (NKID). Positions 504-507 (NKID) are G4. The G5 stretch occupies residues 540–542 (SAK).

Belongs to the TRAFAC class translation factor GTPase superfamily. Classic translation factor GTPase family. IF-2 subfamily.

It localises to the cytoplasm. Functionally, one of the essential components for the initiation of protein synthesis. Protects formylmethionyl-tRNA from spontaneous hydrolysis and promotes its binding to the 30S ribosomal subunits. Also involved in the hydrolysis of GTP during the formation of the 70S ribosomal complex. The sequence is that of Translation initiation factor IF-2 from Vibrio atlanticus (strain LGP32) (Vibrio splendidus (strain Mel32)).